Consider the following 367-residue polypeptide: Apolipoprotein A-V (367 aa).

An N-terminal signal peptide occupies residues 1–20 (MVAVLTWALALLSAFATVQT). At S56 the chain carries Phosphoserine. The tract at residues 71-90 (LGPLSGQGREPPGLPHDPEG) is disordered.

It belongs to the apolipoprotein A1/A4/E family. As to quaternary structure, interacts with GPIHBP1. Interacts with SORL1; this interaction leads to APOA5 internalization and sorting either to lysosomes and degradation, or to the trans-Golgi network. Phosphorylated by FAM20C in the extracellular medium.

It is found in the secreted. The protein localises to the early endosome. The protein resides in the late endosome. It localises to the golgi apparatus. Its subcellular location is the trans-Golgi network. Its function is as follows. Minor apolipoprotein mainly associated with HDL and to a lesser extent with VLDL. May also be associated with chylomicrons. Important determinant of plasma triglyceride (TG) levels by both being a potent stimulator of apo-CII lipoprotein lipase (LPL) TG hydrolysis and an inhibitor of the hepatic VLDL-TG production rate (without affecting the VLDL-apoB production rate). Activates poorly lecithin:cholesterol acyltransferase (LCAT) and does not enhance efflux of cholesterol from macrophages. Binds heparin. In Neomonachus schauinslandi (Hawaiian monk seal), this protein is Apolipoprotein A-V (APOA5).